A 424-amino-acid chain; its full sequence is Imidazolonepropionase (424 aa).

Positions 84 and 86 each coordinate Fe(3+). 2 residues coordinate Zn(2+): histidine 84 and histidine 86. 3 residues coordinate 4-imidazolone-5-propanoate: arginine 93, tyrosine 156, and histidine 189. Residue tyrosine 156 participates in N-formimidoyl-L-glutamate binding. Residue histidine 254 coordinates Fe(3+). Residue histidine 254 participates in Zn(2+) binding. Residue glutamate 257 coordinates 4-imidazolone-5-propanoate. Fe(3+) is bound at residue aspartate 328. Aspartate 328 serves as a coordination point for Zn(2+). N-formimidoyl-L-glutamate contacts are provided by asparagine 330 and glycine 332. Residue serine 333 participates in 4-imidazolone-5-propanoate binding.

Belongs to the metallo-dependent hydrolases superfamily. HutI family. Zn(2+) is required as a cofactor. It depends on Fe(3+) as a cofactor.

It is found in the cytoplasm. The catalysed reaction is 4-imidazolone-5-propanoate + H2O = N-formimidoyl-L-glutamate. Its pathway is amino-acid degradation; L-histidine degradation into L-glutamate; N-formimidoyl-L-glutamate from L-histidine: step 3/3. Functionally, catalyzes the hydrolytic cleavage of the carbon-nitrogen bond in imidazolone-5-propanoate to yield N-formimidoyl-L-glutamate. It is the third step in the universal histidine degradation pathway. The chain is Imidazolonepropionase from Geobacillus sp. (strain WCH70).